We begin with the raw amino-acid sequence, 447 residues long: DNA primase DnaG (447 aa).

Residues 200–274 enclose the Toprim domain; sequence DSIIVVEGRA…DIDYVARAPE (75 aa). Positions 206, 248, and 250 each coordinate Mg(2+).

The protein belongs to the archaeal DnaG primase family. As to quaternary structure, forms a ternary complex with MCM helicase and DNA. Component of the archaeal exosome complex. Requires Mg(2+) as cofactor.

The enzyme catalyses ssDNA + n NTP = ssDNA/pppN(pN)n-1 hybrid + (n-1) diphosphate.. Functionally, RNA polymerase that catalyzes the synthesis of short RNA molecules used as primers for DNA polymerase during DNA replication. Also part of the exosome, which is a complex involved in RNA degradation. Acts as a poly(A)-binding protein that enhances the interaction between heteromeric, adenine-rich transcripts and the exosome. The polypeptide is DNA primase DnaG (Pyrococcus horikoshii (strain ATCC 700860 / DSM 12428 / JCM 9974 / NBRC 100139 / OT-3)).